Consider the following 587-residue polypeptide: Glutamine--tRNA ligase (587 aa).

The 'HIGH' region motif lies at 58 to 68 (PEPNGYLHIGH). ATP contacts are provided by residues 59-61 (EPN) and 65-71 (HIGHAKS). L-glutamine is bound by residues D91 and Y240. Residues T259 and 294-295 (RL) each bind ATP. The 'KMSKS' region motif lies at 301–305 (VTSKR).

Belongs to the class-I aminoacyl-tRNA synthetase family. Monomer.

It localises to the cytoplasm. It catalyses the reaction tRNA(Gln) + L-glutamine + ATP = L-glutaminyl-tRNA(Gln) + AMP + diphosphate. The chain is Glutamine--tRNA ligase from Bordetella bronchiseptica (strain ATCC BAA-588 / NCTC 13252 / RB50) (Alcaligenes bronchisepticus).